A 42-amino-acid chain; its full sequence is Gastric inhibitory polypeptide (42 aa).

Belongs to the glucagon family.

It is found in the secreted. Functionally, potent stimulator of insulin secretion and relatively poor inhibitor of gastric acid secretion. This Sus scrofa (Pig) protein is Gastric inhibitory polypeptide (GIP).